Reading from the N-terminus, the 429-residue chain is Trigger factor (429 aa).

Residues 164–249 (GDTAVIDFEG…VKEVKTKVLP (86 aa)) enclose the PPIase FKBP-type domain.

It belongs to the FKBP-type PPIase family. Tig subfamily.

It localises to the cytoplasm. It catalyses the reaction [protein]-peptidylproline (omega=180) = [protein]-peptidylproline (omega=0). Involved in protein export. Acts as a chaperone by maintaining the newly synthesized protein in an open conformation. Functions as a peptidyl-prolyl cis-trans isomerase. In Lysinibacillus sphaericus (strain C3-41), this protein is Trigger factor.